Consider the following 420-residue polypeptide: Polymerase delta-interacting protein 3 (420 aa).

Alanine 2 is subject to N-acetylalanine. Serine 5 bears the Phosphoserine mark. Arginine 33 is subject to Omega-N-methylarginine. The residue at position 127 (serine 127) is a Phosphoserine. Threonine 140 is subject to Phosphothreonine. Lysine 200 is covalently cross-linked (Glycyl lysine isopeptide (Lys-Gly) (interchain with G-Cter in SUMO2)). Phosphoserine occurs at positions 215 and 217. Residue lysine 223 forms a Glycyl lysine isopeptide (Lys-Gly) (interchain with G-Cter in SUMO2) linkage. Serine 244 is modified (phosphoserine). Lysine 248 is covalently cross-linked (Glycyl lysine isopeptide (Lys-Gly) (interchain with G-Cter in SUMO2)). The tract at residues 256 to 277 is disordered; it reads TLVNKEEPPKELPPAEPVLSPL. Serine 275 carries the phosphoserine modification. In terms of domain architecture, RRM spans 280 to 351; sequence TKMTVNNLHP…QPMKCNLHMN (72 aa). The tract at residues 369-394 is disordered; it reads PSVKKESELPRRGNPASSNPPAEVDP. The segment covering 370-379 has biased composition (basic and acidic residues); that stretch reads SVKKESELPR. A Glycyl lysine isopeptide (Lys-Gly) (interchain with G-Cter in SUMO2) cross-link involves residue lysine 372. Phosphoserine is present on serine 385. A Glycyl lysine isopeptide (Lys-Gly) (interchain with G-Cter in SUMO2) cross-link involves residue lysine 417.

Interacts with POLD2. Interacts with NCBP1 and EIF4A3. Associates with the multiprotein exon junction complex (EJC). Interacts with RPS6KB1 (activated). Interacts with ERH. Interacts with THOC2, DDX39B and ZC3H11A; the interactions are ATP-dependent and indicative for an association with the TREX complex.

Its subcellular location is the nucleus. The protein resides in the nucleus speckle. It localises to the cytoplasm. Functionally, is involved in regulation of translation. Is preferentially associated with CBC-bound spliced mRNA-protein complexes during the pioneer round of mRNA translation. Contributes to enhanced translational efficiency of spliced over nonspliced mRNAs. Recruits activated ribosomal protein S6 kinase beta-1 I/RPS6KB1 to newly synthesized mRNA. Involved in nuclear mRNA export; probably mediated by association with the TREX complex. This Mus musculus (Mouse) protein is Polymerase delta-interacting protein 3 (Poldip3).